A 329-amino-acid chain; its full sequence is Biotin synthase (329 aa).

The region spanning 48–278 (FLGNGVDLCS…TKKIAVCGGR (231 aa)) is the Radical SAM core domain. Residues C66, C70, and C73 each contribute to the [4Fe-4S] cluster site. [2Fe-2S] cluster-binding residues include S143 and C203.

Belongs to the radical SAM superfamily. Biotin synthase family. In terms of assembly, homodimer. Requires [4Fe-4S] cluster as cofactor. It depends on [2Fe-2S] cluster as a cofactor.

The catalysed reaction is (4R,5S)-dethiobiotin + (sulfur carrier)-SH + 2 reduced [2Fe-2S]-[ferredoxin] + 2 S-adenosyl-L-methionine = (sulfur carrier)-H + biotin + 2 5'-deoxyadenosine + 2 L-methionine + 2 oxidized [2Fe-2S]-[ferredoxin]. The protein operates within cofactor biosynthesis; biotin biosynthesis; biotin from 7,8-diaminononanoate: step 2/2. Functionally, catalyzes the conversion of dethiobiotin (DTB) to biotin by the insertion of a sulfur atom into dethiobiotin via a radical-based mechanism. This Geobacter metallireducens (strain ATCC 53774 / DSM 7210 / GS-15) protein is Biotin synthase.